The following is a 491-amino-acid chain: PE-PGRS family protein PE_PGRS26 (491 aa).

In terms of domain architecture, PE spans 1–93 (MSNVMVVPGM…VGSYAAAEAA (93 aa)). Gly residues-rich tracts occupy residues 207-221 (NGGT…GGGL) and 229-238 (GGNGGGGDAG). Disordered regions lie at residues 207 to 238 (NGGT…GDAG), 255 to 275 (DGGA…ARGG), and 444 to 491 (AGGN…GKHG). Over residues 444 to 485 (AGGNGGDGGPSQGGGNPGFGGDGGTGGPGGVGVPDGIGGANG) the composition is skewed to gly residues.

It belongs to the mycobacterial PE family. PGRS subfamily.

The protein resides in the cell surface. The sequence is that of PE-PGRS family protein PE_PGRS26 from Mycobacterium tuberculosis (strain ATCC 25618 / H37Rv).